The chain runs to 874 residues: Alanine--tRNA ligase (874 aa).

Residues His-564, His-568, Cys-665, and His-669 each contribute to the Zn(2+) site.

It belongs to the class-II aminoacyl-tRNA synthetase family. Requires Zn(2+) as cofactor.

The protein localises to the cytoplasm. It catalyses the reaction tRNA(Ala) + L-alanine + ATP = L-alanyl-tRNA(Ala) + AMP + diphosphate. Functionally, catalyzes the attachment of alanine to tRNA(Ala) in a two-step reaction: alanine is first activated by ATP to form Ala-AMP and then transferred to the acceptor end of tRNA(Ala). Also edits incorrectly charged Ser-tRNA(Ala) and Gly-tRNA(Ala) via its editing domain. This chain is Alanine--tRNA ligase, found in Burkholderia pseudomallei (strain 668).